The primary structure comprises 609 residues: Dihydroxy-acid dehydratase (609 aa).

A Mg(2+)-binding site is contributed by aspartate 81. A [2Fe-2S] cluster-binding site is contributed by cysteine 122. 2 residues coordinate Mg(2+): aspartate 123 and lysine 124. An N6-carboxylysine modification is found at lysine 124. Cysteine 195 provides a ligand contact to [2Fe-2S] cluster. Glutamate 491 lines the Mg(2+) pocket. The active-site Proton acceptor is serine 517.

This sequence belongs to the IlvD/Edd family. As to quaternary structure, homodimer. The cofactor is [2Fe-2S] cluster. Mg(2+) is required as a cofactor.

The catalysed reaction is (2R)-2,3-dihydroxy-3-methylbutanoate = 3-methyl-2-oxobutanoate + H2O. It carries out the reaction (2R,3R)-2,3-dihydroxy-3-methylpentanoate = (S)-3-methyl-2-oxopentanoate + H2O. The protein operates within amino-acid biosynthesis; L-isoleucine biosynthesis; L-isoleucine from 2-oxobutanoate: step 3/4. It participates in amino-acid biosynthesis; L-valine biosynthesis; L-valine from pyruvate: step 3/4. Functions in the biosynthesis of branched-chain amino acids. Catalyzes the dehydration of (2R,3R)-2,3-dihydroxy-3-methylpentanoate (2,3-dihydroxy-3-methylvalerate) into 2-oxo-3-methylpentanoate (2-oxo-3-methylvalerate) and of (2R)-2,3-dihydroxy-3-methylbutanoate (2,3-dihydroxyisovalerate) into 2-oxo-3-methylbutanoate (2-oxoisovalerate), the penultimate precursor to L-isoleucine and L-valine, respectively. This is Dihydroxy-acid dehydratase from Acinetobacter baumannii (strain ATCC 17978 / DSM 105126 / CIP 53.77 / LMG 1025 / NCDC KC755 / 5377).